The sequence spans 414 residues: Glyco-Gag protein (414 aa).

Residues 1 to 51 (MSGASSGTAIGAHLFGVSPECRVLIGDEGAGPSKSLSEVSFSVWYQSRAAR) lie on the Cytoplasmic side of the membrane. A helical transmembrane segment spans residues 52–72 (LVIFCLVASFLVPCLTFLIAE). The Extracellular segment spans residues 73–414 (TVMGQTIATP…TNLAQVKQVV (342 aa)). Asn-134 carries an N-linked (GlcNAc...) asparagine; by host glycan. The disordered stretch occupies residues 171 to 282 (VRPFLPPPKP…LREGPNNRPQ (112 aa)). Residues 174 to 193 (FLPPPKPPTPLPQPLSPQPS) are compositionally biased toward pro residues. A compositionally biased stretch (low complexity) spans 194-206 (APLTSSLYPVLPK). Positions 210–220 (PKPPVLPPDPS) are enriched in pro residues.

Post-translationally, glycosylated by host. Cleaved by host near the middle of the molecule, releasing the c-terminal half containing capsid and nucleoprotein domains op GAG.

Its subcellular location is the host cell membrane. Its function is as follows. Plays a role in viral particle release. Presumably acts by facilitating the fission of the virion bud at the cell surface. The chain is Glyco-Gag protein from Felidae (cat family).